Consider the following 132-residue polypeptide: Small ribosomal subunit protein uS8 (132 aa).

The protein belongs to the universal ribosomal protein uS8 family. Part of the 30S ribosomal subunit. Contacts proteins S5 and S12.

In terms of biological role, one of the primary rRNA binding proteins, it binds directly to 16S rRNA central domain where it helps coordinate assembly of the platform of the 30S subunit. In Leuconostoc mesenteroides subsp. mesenteroides (strain ATCC 8293 / DSM 20343 / BCRC 11652 / CCM 1803 / JCM 6124 / NCDO 523 / NBRC 100496 / NCIMB 8023 / NCTC 12954 / NRRL B-1118 / 37Y), this protein is Small ribosomal subunit protein uS8.